The chain runs to 417 residues: Probable phosphoglycerate kinase (417 aa).

Residues Val23, Asp24, Phe25, Asn26, Gln38, Arg39, Ser62, His63, Gly65, Arg66, Leu121, Arg122, His169, and Arg170 each contribute to the (2R)-3-phosphoglycerate site. Gly213 provides a ligand contact to ADP. Gly213 serves as a coordination point for CDP. Residues Ala214 and Lys215 each contribute to the AMP site. Ala214 is a binding site for ATP. A Mg(2+)-binding site is contributed by Ala214. Residues Ala217 and Asp218 each coordinate Mg(2+). Residue Asp218 participates in CDP binding. Lys219 contributes to the AMP binding site. Position 219 (Lys219) interacts with ATP. Gly237 serves as a coordination point for ADP. Gly237 is a CDP binding site. The AMP site is built by Gly238 and Gly312. ATP is bound by residues Gly238 and Gly312. CDP-binding residues include Gly337, Ala339, and Phe342. ADP is bound at residue Phe342. Position 343 (Glu343) interacts with AMP. Residues Glu343, Asp374, and Thr375 each coordinate ATP. Asp374 serves as a coordination point for Mg(2+).

Belongs to the phosphoglycerate kinase family. In terms of assembly, monomer. It depends on Mg(2+) as a cofactor.

It is found in the cytoplasm. The enzyme catalyses (2R)-3-phosphoglycerate + ATP = (2R)-3-phospho-glyceroyl phosphate + ADP. Its pathway is carbohydrate degradation; glycolysis; pyruvate from D-glyceraldehyde 3-phosphate: step 2/5. The protein is Probable phosphoglycerate kinase (pgk-1) of Caenorhabditis elegans.